Consider the following 323-residue polypeptide: Breast cancer metastasis-suppressor 1-like protein (323 aa).

A compositionally biased stretch (basic and acidic residues) spans 1-15 (MPVHSREKKENNHDE). Residues 1 to 56 (MPVHSREKKENNHDEMEVDYGENEGSTSEEEETESSSVSEEGDSSEMDDEDCERRR) form a disordered region. A compositionally biased stretch (acidic residues) spans 16 to 51 (MEVDYGENEGSTSEEEETESSSVSEEGDSSEMDDED). 2 coiled-coil regions span residues 50–82 (EDCE…KERL) and 147–178 (EKLL…ITSE).

Belongs to the BRMS1 family.

It localises to the nucleus. In terms of biological role, involved in the histone deacetylase (HDAC1)-dependent transcriptional repression activity. This chain is Breast cancer metastasis-suppressor 1-like protein (BRMS1L), found in Gallus gallus (Chicken).